Here is an 832-residue protein sequence, read N- to C-terminus: Thymine dioxygenase JBP1-A (832 aa).

Basic and acidic residues predominate over residues 1–12 (MKQKRGKQDVKM). The tract at residues 1–24 (MKQKRGKQDVKMLESAPPQLLPKK) is disordered. Residues 80–282 (VVGGVFLPGA…RLTCVCYYRA (203 aa)) form a thymine dioxygenase region. Residues His207, Asp209, and His257 each coordinate Fe cation. Residue Arg273 coordinates 2-oxoglutarate. Positions 409–578 (LGGALKAAEE…IEEARRRGSS (170 aa)) are DNA-binding JBP1 domain.

This sequence belongs to the TET family. JBP1 subfamily. In terms of assembly, monomer. Binds to DNA as a monomer. Fe(2+) is required as a cofactor.

Its subcellular location is the nucleus. It catalyses the reaction thymine + 2-oxoglutarate + O2 = 5-hydroxymethyluracil + succinate + CO2. Dioxygenase that catalyzes the first step of DNA base J (beta-d-glucosyl-HOMedU) biosynthesis by converting thymine to 5-hydroxymethyluracil (HOMedU). DNA base J is a hypermodified thymidine residue found in the genome of kinetoplastid parasites, which is localized primarily to repetitive DNA, namely the telomeres, and is implicated in the regulation of antigenic variation. Also specifically binds to base J-containing DNA (J-DNA). Involved in propagation and maintenance of DNA base J synthesis initiated by JBP2 by specifically binding already synthesized DNA base J and propagating J synthesis. Thymine dioxygenase activity and J-DNA-binding are independent functions. This chain is Thymine dioxygenase JBP1-A (JBP1A), found in Trypanosoma cruzi (strain CL Brener).